Consider the following 303-residue polypeptide: uncharacterized protein (303 aa).

This is an uncharacterized protein from Haemophilus influenzae (strain ATCC 51907 / DSM 11121 / KW20 / Rd).